Reading from the N-terminus, the 397-residue chain is 2-acyl-1-lysophosphatidylinositol acyltransferase (397 aa).

Residues 112 to 117 carry the HXXXXD motif motif; the sequence is HQIYTD.

It belongs to the 1-acyl-sn-glycerol-3-phosphate acyltransferase family.

The protein localises to the lipid droplet. It catalyses the reaction 1-heptadecanoyl-sn-glycero-3-phosphate + octadecanoyl-CoA = 1-heptadecanoyl-2-octadecanoyl-sn-glycero-3-phosphate + CoA. The catalysed reaction is 1-heptadecanoyl-sn-glycero-3-phosphate + tetradecanoyl-CoA = 1-heptadecanoyl-2-tetradecanoyl-sn-glycero-3-phosphate + CoA. The enzyme catalyses 1-heptadecanoyl-sn-glycero-3-phosphate + hexadecanoyl-CoA = 1-heptadecanoyl-2-hexadecanoyl-sn-glycero-3-phosphate + CoA. In terms of biological role, acyltransferase with lysophosphatidic acid acyltransferase (LPAAT) activity. Fatty acyl substrates include 18:0-acyl-CoA, 16:0-acyl-CoA, 17:0-acyl-CoA and 14:0-acyl-CoA. Responsible for the acyl-CoA-dependent introduction of saturated very long chain fatty acids (VLCFAs) into phosphatidylinositol, transferring saturated FAs with 18 to 26 carbon atoms. Responsible for the incorporation of stearate into phosphatidylinositol. Overexpression has an effect on chromosome stability. Regulates phosphorylation and expression of glycerol-3-phosphate acyltransferase SCT1. The sequence is that of 2-acyl-1-lysophosphatidylinositol acyltransferase from Saccharomyces cerevisiae (strain ATCC 204508 / S288c) (Baker's yeast).